We begin with the raw amino-acid sequence, 153 residues long: Late embryogenesis abundant protein B19.4 (153 aa).

The tract at residues 1–153 (MASGQQERSE…IDESKFKTKS (153 aa)) is disordered. Basic and acidic residues-rich tracts occupy residues 7–19 (ERSE…REGE), 32–122 (EAQE…EMGR), and 133–153 (GGER…KTKS). 4 tandem repeats follow at residues 43–62 (RGGQ…EMGH), 63–82 (KGGE…EMGH), 83–102 (KGGE…EMGH), and 103–122 (KGGE…EMGR). The tract at residues 43–122 (RGGQTRKEQL…GEEGYREMGR (80 aa)) is 4 X 20 AA tandem repeats.

Belongs to the small hydrophilic plant seed protein family.

Its function is as follows. Lea proteins are late embryonic proteins abundant in higher plant seed embryos. The chain is Late embryogenesis abundant protein B19.4 (B19.4) from Hordeum vulgare (Barley).